A 114-amino-acid polypeptide reads, in one-letter code: FK506-binding protein 1 (114 aa).

One can recognise a PPIase FKBP-type domain in the interval 26–114; it reads GDLVTIHYTG…VFDVELLKIN (89 aa).

It belongs to the FKBP-type PPIase family. FKBP1 subfamily.

It localises to the cytoplasm. It carries out the reaction [protein]-peptidylproline (omega=180) = [protein]-peptidylproline (omega=0). Its activity is regulated as follows. Inhibited by both FK506 and rapamycin. In terms of biological role, PPIases accelerate the folding of proteins. It catalyzes the cis-trans isomerization of proline imidic peptide bonds in oligopeptides. The protein is FK506-binding protein 1 (FPR1) of Kluyveromyces lactis (strain ATCC 8585 / CBS 2359 / DSM 70799 / NBRC 1267 / NRRL Y-1140 / WM37) (Yeast).